The sequence spans 176 residues: Dual-action ribosomal maturation protein DarP (176 aa).

This sequence belongs to the DarP family.

The protein resides in the cytoplasm. Functionally, member of a network of 50S ribosomal subunit biogenesis factors which assembles along the 30S-50S interface, preventing incorrect 23S rRNA structures from forming. Promotes peptidyl transferase center (PTC) maturation. This chain is Dual-action ribosomal maturation protein DarP, found in Haemophilus ducreyi (strain 35000HP / ATCC 700724).